The primary structure comprises 150 residues: uncharacterized protein (150 aa).

This is an uncharacterized protein from Mycoplasma genitalium (strain ATCC 33530 / DSM 19775 / NCTC 10195 / G37) (Mycoplasmoides genitalium).